An 872-amino-acid chain; its full sequence is Alanine--tRNA ligase (872 aa).

Zn(2+)-binding residues include His-566, His-570, Cys-668, and His-672.

The protein belongs to the class-II aminoacyl-tRNA synthetase family. It depends on Zn(2+) as a cofactor.

It localises to the cytoplasm. The enzyme catalyses tRNA(Ala) + L-alanine + ATP = L-alanyl-tRNA(Ala) + AMP + diphosphate. In terms of biological role, catalyzes the attachment of alanine to tRNA(Ala) in a two-step reaction: alanine is first activated by ATP to form Ala-AMP and then transferred to the acceptor end of tRNA(Ala). Also edits incorrectly charged Ser-tRNA(Ala) and Gly-tRNA(Ala) via its editing domain. The protein is Alanine--tRNA ligase of Lactococcus lactis subsp. lactis (strain IL1403) (Streptococcus lactis).